Here is a 1394-residue protein sequence, read N- to C-terminus: DNA-directed RNA polymerase subunit beta' (1394 aa).

Zn(2+) contacts are provided by Cys-70, Cys-72, Cys-85, and Cys-88. Positions 470, 472, and 474 each coordinate Mg(2+). Zn(2+) is bound by residues Cys-815, Cys-889, Cys-896, and Cys-899.

Belongs to the RNA polymerase beta' chain family. The RNAP catalytic core consists of 2 alpha, 1 beta, 1 beta' and 1 omega subunit. When a sigma factor is associated with the core the holoenzyme is formed, which can initiate transcription. Requires Mg(2+) as cofactor. Zn(2+) serves as cofactor.

It catalyses the reaction RNA(n) + a ribonucleoside 5'-triphosphate = RNA(n+1) + diphosphate. Its function is as follows. DNA-dependent RNA polymerase catalyzes the transcription of DNA into RNA using the four ribonucleoside triphosphates as substrates. This Anaeromyxobacter sp. (strain K) protein is DNA-directed RNA polymerase subunit beta'.